The sequence spans 332 residues: MREDTKVYDITIIGGGPVGLFTAFYGGMRQASVKIIESLPQLGGQLSALYPEKYIYDVAGFPKIRAQELINNLKEQMAKFDQTICLEQAVESVEKQADGVFKLVTNEETHYSKTVIITAGNGAFKPRKLELENAEQYEGKNLHYFVDDLQKFAGRRVAILGGGDSAVDWALMLEPIAKEVSIIHRRDKFRAHEHSVENLHASKVNVLTPFVPAELIGEDKIEQLVLEEVKGDRKEILEIDDLIVNYGFVSSLGPIKNWGLDIEKNSIVVKSTMETNIEGFFAAGDICTYEGKVNLIASGFGEAPTAVNNAKAYMDPKARVQPLHSTSLFENK.

Residues Glu-37, Gln-45, Tyr-50, Val-90, Phe-124, Asp-285, and Thr-326 each coordinate FAD.

It belongs to the ferredoxin--NADP reductase type 2 family. Homodimer. It depends on FAD as a cofactor.

The catalysed reaction is 2 reduced [2Fe-2S]-[ferredoxin] + NADP(+) + H(+) = 2 oxidized [2Fe-2S]-[ferredoxin] + NADPH. In Bacillus subtilis (strain 168), this protein is Ferredoxin--NADP reductase 2 (yumC).